Here is a 638-residue protein sequence, read N- to C-terminus: Threonine--tRNA ligase (638 aa).

Residues 1 to 61 form the TGS domain; sequence MPDIKLPDGS…EQNADLAIIT (61 aa). Residues 242 to 533 form a catalytic region; that stretch reads DHRRLGKQYD…LIENFAGALP (292 aa). Residues Cys-333, His-384, and His-510 each coordinate Zn(2+).

It belongs to the class-II aminoacyl-tRNA synthetase family. Homodimer. Requires Zn(2+) as cofactor.

The protein localises to the cytoplasm. It catalyses the reaction tRNA(Thr) + L-threonine + ATP = L-threonyl-tRNA(Thr) + AMP + diphosphate + H(+). Functionally, catalyzes the attachment of threonine to tRNA(Thr) in a two-step reaction: L-threonine is first activated by ATP to form Thr-AMP and then transferred to the acceptor end of tRNA(Thr). Also edits incorrectly charged L-seryl-tRNA(Thr). The chain is Threonine--tRNA ligase from Dechloromonas aromatica (strain RCB).